Reading from the N-terminus, the 347-residue chain is DNA-directed RNA polymerase subunit alpha (347 aa).

An alpha N-terminal domain (alpha-NTD) region spans residues 1 to 226 (MLISQRPTLS…ELFGLARELN (226 aa)). Residues 241 to 347 (ADHIASFALP…DQDYAETEQL (107 aa)) form an alpha C-terminal domain (alpha-CTD) region.

This sequence belongs to the RNA polymerase alpha chain family. Homodimer. The RNAP catalytic core consists of 2 alpha, 1 beta, 1 beta' and 1 omega subunit. When a sigma factor is associated with the core the holoenzyme is formed, which can initiate transcription.

The catalysed reaction is RNA(n) + a ribonucleoside 5'-triphosphate = RNA(n+1) + diphosphate. DNA-dependent RNA polymerase catalyzes the transcription of DNA into RNA using the four ribonucleoside triphosphates as substrates. In Mycobacterium ulcerans (strain Agy99), this protein is DNA-directed RNA polymerase subunit alpha.